Consider the following 520-residue polypeptide: Glutamate--cysteine ligase (520 aa).

Belongs to the glutamate--cysteine ligase type 1 family. Type 1 subfamily.

The enzyme catalyses L-cysteine + L-glutamate + ATP = gamma-L-glutamyl-L-cysteine + ADP + phosphate + H(+). Its pathway is sulfur metabolism; glutathione biosynthesis; glutathione from L-cysteine and L-glutamate: step 1/2. The chain is Glutamate--cysteine ligase from Serratia proteamaculans (strain 568).